The chain runs to 191 residues: Peptidyl-tRNA hydrolase (191 aa).

Position 17 (tyrosine 17) interacts with tRNA. Histidine 22 functions as the Proton acceptor in the catalytic mechanism. TRNA is bound by residues tyrosine 68, asparagine 70, and asparagine 116.

This sequence belongs to the PTH family. In terms of assembly, monomer.

It is found in the cytoplasm. The enzyme catalyses an N-acyl-L-alpha-aminoacyl-tRNA + H2O = an N-acyl-L-amino acid + a tRNA + H(+). Its function is as follows. Hydrolyzes ribosome-free peptidyl-tRNAs (with 1 or more amino acids incorporated), which drop off the ribosome during protein synthesis, or as a result of ribosome stalling. In terms of biological role, catalyzes the release of premature peptidyl moieties from peptidyl-tRNA molecules trapped in stalled 50S ribosomal subunits, and thus maintains levels of free tRNAs and 50S ribosomes. This chain is Peptidyl-tRNA hydrolase, found in Mycobacterium marinum (strain ATCC BAA-535 / M).